Here is a 504-residue protein sequence, read N- to C-terminus: MKYSYLLLILLLSNLYKEGFSQGQPDSIVLSATIYDESPIVTDFEIETYYNGVVEGIVQPDLGADGTPVYCCGDSPVTENGRIVVHNQSTFYSWFHSVPGVNVPIPYDLTLTRVGDSTYAYQSNSFFPIDGNGFDNSTVYPNEPHYLGHNFHFCMKIHYSFTYHGGEYFTFSGDDDVWVFFDDVLRIDIGGIHTAASRTVNMDDLGLTVGQSYPWDFFYCERHTSQSTLNIITNLNFTCSAYDACGVCDGHNDTCCMVNQCSESPINPCLIQACGPDNNYQCEFVDKICNTTNDKCLVESCEIGFGCLAIPKNCNDNDPCTTDHCDPAIGCYYDKFDNCDACNAVDTCITNDLCFPRECNPRGNPPCLINPINCTSTDPCIFSYCENGVCIPTYICTPTPSVTPTVTPTVTPTVTPTVTPTVTPTVTPTPTTTPTPSPTTVPPRPTPTPLPADPPPYDLEEGCLVCRDLDCEKTGKSCTYLENETIRLFECKGVGCCKYTPTCY.

A signal peptide spans 1–21; it reads MKYSYLLLILLLSNLYKEGFS. N-linked (GlcNAc...) asparagine glycans are attached at residues Asn-87, Asn-136, Asn-236, Asn-252, Asn-290, and Asn-373. Residues 111-251 enclose the PA14 domain; that stretch reads LTRVGDSTYA…YDACGVCDGH (141 aa). Low complexity predominate over residues 417–430; it reads TVTPTVTPTVTPTP. The interval 417–453 is disordered; the sequence is TVTPTVTPTVTPTPTTTPTPSPTTVPPRPTPTPLPAD. A compositionally biased stretch (pro residues) spans 431-453; sequence TTTPTPSPTTVPPRPTPTPLPAD. N-linked (GlcNAc...) asparagine glycosylation is present at Asn-483.

The protein belongs to the prespore-cell-inducing factor family.

It is found in the secreted. The chain is Protein psiD (psiD) from Dictyostelium discoideum (Social amoeba).